The sequence spans 156 residues: 3-hydroxyacyl-[acyl-carrier-protein] dehydratase FabZ (156 aa).

The active site involves His-50.

The protein belongs to the thioester dehydratase family. FabZ subfamily.

The protein localises to the cytoplasm. It catalyses the reaction a (3R)-hydroxyacyl-[ACP] = a (2E)-enoyl-[ACP] + H2O. Functionally, involved in unsaturated fatty acids biosynthesis. Catalyzes the dehydration of short chain beta-hydroxyacyl-ACPs and long chain saturated and unsaturated beta-hydroxyacyl-ACPs. This Janthinobacterium sp. (strain Marseille) (Minibacterium massiliensis) protein is 3-hydroxyacyl-[acyl-carrier-protein] dehydratase FabZ.